Consider the following 597-residue polypeptide: Elongation factor 4 (597 aa).

The tr-type G domain maps to 2 to 184; sequence KHIRNFSIIA…TIVKSIPAPE (183 aa). GTP is bound by residues 14–19 and 131–134; these read DHGKST and NKID.

Belongs to the TRAFAC class translation factor GTPase superfamily. Classic translation factor GTPase family. LepA subfamily.

Its subcellular location is the cell inner membrane. The catalysed reaction is GTP + H2O = GDP + phosphate + H(+). Functionally, required for accurate and efficient protein synthesis under certain stress conditions. May act as a fidelity factor of the translation reaction, by catalyzing a one-codon backward translocation of tRNAs on improperly translocated ribosomes. Back-translocation proceeds from a post-translocation (POST) complex to a pre-translocation (PRE) complex, thus giving elongation factor G a second chance to translocate the tRNAs correctly. Binds to ribosomes in a GTP-dependent manner. The chain is Elongation factor 4 from Aliivibrio fischeri (strain MJ11) (Vibrio fischeri).